Here is a 357-residue protein sequence, read N- to C-terminus: Protein RecA (357 aa).

Residue 71–78 coordinates ATP; it reads GPESSGKT.

Belongs to the RecA family.

It localises to the cytoplasm. Can catalyze the hydrolysis of ATP in the presence of single-stranded DNA, the ATP-dependent uptake of single-stranded DNA by duplex DNA, and the ATP-dependent hybridization of homologous single-stranded DNAs. It interacts with LexA causing its activation and leading to its autocatalytic cleavage. This Ehrlichia ruminantium (strain Gardel) protein is Protein RecA.